Reading from the N-terminus, the 668-residue chain is tRNA 5-methylaminomethyl-2-thiouridine biosynthesis bifunctional protein MnmC (668 aa).

The segment at 1–245 (MKHYSIQPAN…KREMLCGVME (245 aa)) is tRNA (mnm(5)s(2)U34)-methyltransferase. Positions 270 to 668 (IGGGIACALL…LLKGKAVKAG (399 aa)) are FAD-dependent cmnm(5)s(2)U34 oxidoreductase.

It in the N-terminal section; belongs to the methyltransferase superfamily. tRNA (mnm(5)s(2)U34)-methyltransferase family. In the C-terminal section; belongs to the DAO family. The cofactor is FAD.

Its subcellular location is the cytoplasm. It carries out the reaction 5-aminomethyl-2-thiouridine(34) in tRNA + S-adenosyl-L-methionine = 5-methylaminomethyl-2-thiouridine(34) in tRNA + S-adenosyl-L-homocysteine + H(+). Functionally, catalyzes the last two steps in the biosynthesis of 5-methylaminomethyl-2-thiouridine (mnm(5)s(2)U) at the wobble position (U34) in tRNA. Catalyzes the FAD-dependent demodification of cmnm(5)s(2)U34 to nm(5)s(2)U34, followed by the transfer of a methyl group from S-adenosyl-L-methionine to nm(5)s(2)U34, to form mnm(5)s(2)U34. The protein is tRNA 5-methylaminomethyl-2-thiouridine biosynthesis bifunctional protein MnmC of Shigella boydii serotype 18 (strain CDC 3083-94 / BS512).